The sequence spans 635 residues: Threonine--tRNA ligase (635 aa).

One can recognise a TGS domain in the interval 1 to 61 (MVSIRLPDGS…DRDAALAIIT (61 aa)). The catalytic stretch occupies residues 242–533 (DHRKLGKQLD…LIEHHAGAMP (292 aa)). Residues Cys333, His384, and His510 each contribute to the Zn(2+) site.

This sequence belongs to the class-II aminoacyl-tRNA synthetase family. As to quaternary structure, homodimer. Requires Zn(2+) as cofactor.

Its subcellular location is the cytoplasm. It carries out the reaction tRNA(Thr) + L-threonine + ATP = L-threonyl-tRNA(Thr) + AMP + diphosphate + H(+). In terms of biological role, catalyzes the attachment of threonine to tRNA(Thr) in a two-step reaction: L-threonine is first activated by ATP to form Thr-AMP and then transferred to the acceptor end of tRNA(Thr). Also edits incorrectly charged L-seryl-tRNA(Thr). The protein is Threonine--tRNA ligase of Burkholderia ambifaria (strain ATCC BAA-244 / DSM 16087 / CCUG 44356 / LMG 19182 / AMMD) (Burkholderia cepacia (strain AMMD)).